Consider the following 433-residue polypeptide: Histidinol dehydrogenase (433 aa).

Residues serine 236, glutamine 258, and histidine 261 each contribute to the substrate site. Zn(2+) is bound by residues glutamine 258 and histidine 261. Catalysis depends on proton acceptor residues glutamate 325 and histidine 326. 4 residues coordinate substrate: histidine 326, aspartate 359, glutamate 413, and histidine 418. Position 359 (aspartate 359) interacts with Zn(2+). Histidine 418 provides a ligand contact to Zn(2+).

This sequence belongs to the histidinol dehydrogenase family. It depends on Zn(2+) as a cofactor.

The enzyme catalyses L-histidinol + 2 NAD(+) + H2O = L-histidine + 2 NADH + 3 H(+). It participates in amino-acid biosynthesis; L-histidine biosynthesis; L-histidine from 5-phospho-alpha-D-ribose 1-diphosphate: step 9/9. Its function is as follows. Catalyzes the sequential NAD-dependent oxidations of L-histidinol to L-histidinaldehyde and then to L-histidine. In Pseudoalteromonas translucida (strain TAC 125), this protein is Histidinol dehydrogenase.